Here is a 253-residue protein sequence, read N- to C-terminus: Demethylmenaquinone methyltransferase (253 aa).

S-adenosyl-L-methionine is bound by residues Thr62, Asp80, 102 to 103 (DA), and Ser119.

The protein belongs to the class I-like SAM-binding methyltransferase superfamily. MenG/UbiE family.

The enzyme catalyses a 2-demethylmenaquinol + S-adenosyl-L-methionine = a menaquinol + S-adenosyl-L-homocysteine + H(+). It participates in quinol/quinone metabolism; menaquinone biosynthesis; menaquinol from 1,4-dihydroxy-2-naphthoate: step 2/2. Its function is as follows. Methyltransferase required for the conversion of demethylmenaquinol (DMKH2) to menaquinol (MKH2). In Paenarthrobacter aurescens (strain TC1), this protein is Demethylmenaquinone methyltransferase.